The primary structure comprises 75 residues: MKEGMSNNSTTSISQARKAVEQLKMEACMDRVKVSQAASDLLAYCEAHVREDPLIIPVPASENPFREKKFFCTIL.

Cysteine methyl ester is present on Cys72. Cys72 carries S-geranylgeranyl cysteine lipidation. A propeptide spans 73 to 75 (TIL) (removed in mature form).

This sequence belongs to the G protein gamma family. As to quaternary structure, g proteins are composed of 3 units, alpha, beta and gamma. Interacts with beta-1 and beta-2, but not with beta-3. Interacts with KCNK1. Interacts (via C-terminus) with KCNK2/TREK-1 (via N-terminus); this interaction confers ion selectivity to Cl(-) and L-glutamate. Brain.

The protein resides in the cell membrane. Functionally, guanine nucleotide-binding proteins (G proteins) are involved as a modulator or transducer in various transmembrane signaling systems. The beta and gamma chains are required for the GTPase activity, for replacement of GDP by GTP, and for G protein-effector interaction. This is Guanine nucleotide-binding protein G(I)/G(S)/G(O) subunit gamma-4 (Gng4) from Mus musculus (Mouse).